A 38-amino-acid chain; its full sequence is Large ribosomal subunit protein bL36 (38 aa).

The protein belongs to the bacterial ribosomal protein bL36 family.

In Flavobacterium johnsoniae (strain ATCC 17061 / DSM 2064 / JCM 8514 / BCRC 14874 / CCUG 350202 / NBRC 14942 / NCIMB 11054 / UW101) (Cytophaga johnsonae), this protein is Large ribosomal subunit protein bL36.